The sequence spans 352 residues: B1 bradykinin receptor (352 aa).

At 1-41 (MASWPPLQLQSSNQSQLFPQNATACDNAPEAWDLLHRVLPT) the chain is on the extracellular side. N-linked (GlcNAc...) asparagine glycosylation is found at Asn-13 and Asn-21. The chain crosses the membrane as a helical span at residues 42–62 (FIISICSFGLLGNLFVLLVFL). Over 63–72 (LPRRRLNVAE) the chain is Cytoplasmic. The chain crosses the membrane as a helical span at residues 73-93 (IYLANLAASDLVFVLGLPFWA). Residues 94-110 (ENIWNQFNWPFGALLCR) lie on the Extracellular side of the membrane. The cysteines at positions 109 and 188 are disulfide-linked. The helical transmembrane segment at 111-131 (VINGIIKANLFISIFLVVAIS) threads the bilayer. At 132–153 (QDRYCVLVHPMASRRRQRRRQA) the chain is on the cytoplasmic side. The chain crosses the membrane as a helical span at residues 154–174 (RVTCVLIWVVGGLLSIPTFLL). Residues 175 to 206 (RSIQAVPDLNITACILLLPHEAWHFARIVELN) lie on the Extracellular side of the membrane. An N-linked (GlcNAc...) asparagine glycan is attached at Asn-184. Residues 207–227 (ILAFLLPLAAIIFFNYHILAS) traverse the membrane as a helical segment. The Cytoplasmic segment spans residues 228 to 250 (LRGREEVSRTRCGGSKDSKTTAL). A helical membrane pass occupies residues 251–271 (ILTLVVAFLVCWAPYHFFAFL). Topologically, residues 272–294 (EFLFQVQAVRGCFWEDFIDLGLQ) are extracellular. A helical membrane pass occupies residues 295 to 315 (LANFLAFTNSSLNPVIYVFAG). At 316–352 (RLFRTKVWELYKQCTPKSLAPISSSHRKEIFQLFWRN) the chain is on the cytoplasmic side. Cys-329 carries the S-palmitoyl cysteine lipid modification.

Belongs to the G-protein coupled receptor 1 family. Bradykinin receptor subfamily. BDKRB1 sub-subfamily.

The protein localises to the cell membrane. This is a receptor for bradykinin. Could be a factor in chronic pain and inflammation. The protein is B1 bradykinin receptor (BDKRB1) of Macaca fascicularis (Crab-eating macaque).